We begin with the raw amino-acid sequence, 456 residues long: D-glycerate 3-kinase, chloroplastic (456 aa).

A chloroplast-targeting transit peptide spans 1–63 (MAVAISGSSL…KFNDHVVNPS (63 aa)). 215-222 (APQGCGKT) serves as a coordination point for ATP.

This sequence belongs to the GLYK kinase family.

The protein localises to the plastid. It localises to the chloroplast. It is found in the cytoplasm. The enzyme catalyses (R)-glycerate + ATP = (2R)-3-phosphoglycerate + ADP + H(+). It functions in the pathway photosynthesis; photorespiration; 3-phospho-D-glycerate from glycine: step 4/4. Catalyzes the concluding reaction of the photorespiratory C2 cycle, an indispensable ancillary metabolic pathway to the photosynthetic C3 cycle that enables land plants to grow in an oxygen-containing atmosphere. Its function is as follows. Cytoplasmic D-glycerate 3-kinase that constitutes a photorespiratory bypass that alleviates fluctuating light-induced photoinhibition. This Arabidopsis thaliana (Mouse-ear cress) protein is D-glycerate 3-kinase, chloroplastic.